The primary structure comprises 297 residues: uncharacterized protein (297 aa).

A run of 4 helical transmembrane segments spans residues 3-23 (DYIY…LYML), 38-58 (VIHI…MPAL), 103-123 (IEGI…TALL), and 128-148 (YVFL…LLAM).

The protein localises to the cell membrane. This is an uncharacterized protein from Bacillus subtilis (strain 168).